We begin with the raw amino-acid sequence, 183 residues long: Hypoxanthine/guanine phosphoribosyltransferase (183 aa).

It belongs to the purine/pyrimidine phosphoribosyltransferase family. Archaeal HPRT subfamily. Homodimer.

It is found in the cytoplasm. The enzyme catalyses IMP + diphosphate = hypoxanthine + 5-phospho-alpha-D-ribose 1-diphosphate. It catalyses the reaction GMP + diphosphate = guanine + 5-phospho-alpha-D-ribose 1-diphosphate. Its pathway is purine metabolism; IMP biosynthesis via salvage pathway; IMP from hypoxanthine: step 1/1. Functionally, catalyzes a salvage reaction resulting in the formation of IMP that is energically less costly than de novo synthesis. The protein is Hypoxanthine/guanine phosphoribosyltransferase of Methanothermococcus okinawensis (strain DSM 14208 / JCM 11175 / IH1).